The primary structure comprises 157 residues: Endoribonuclease YbeY (157 aa).

Zn(2+) is bound by residues His114, His118, and His124.

It belongs to the endoribonuclease YbeY family. Requires Zn(2+) as cofactor.

The protein localises to the cytoplasm. Functionally, single strand-specific metallo-endoribonuclease involved in late-stage 70S ribosome quality control and in maturation of the 3' terminus of the 16S rRNA. In Salmonella agona (strain SL483), this protein is Endoribonuclease YbeY.